The sequence spans 309 residues: 2-phospho-L-lactate transferase (309 aa).

7,8-didemethyl-8-hydroxy-5-deazariboflavin-binding residues include D48 and K87.

This sequence belongs to the CofD family. In terms of assembly, homodimer. Mg(2+) is required as a cofactor.

The catalysed reaction is (2S)-lactyl-2-diphospho-5'-guanosine + 7,8-didemethyl-8-hydroxy-5-deazariboflavin = oxidized coenzyme F420-0 + GMP + H(+). It functions in the pathway cofactor biosynthesis; coenzyme F420 biosynthesis. In terms of biological role, catalyzes the transfer of the 2-phospholactate moiety from (2S)-lactyl-2-diphospho-5'-guanosine to 7,8-didemethyl-8-hydroxy-5-deazariboflavin (FO) with the formation of oxidized coenzyme F420-0 and GMP. The sequence is that of 2-phospho-L-lactate transferase from Methanosarcina barkeri (strain Fusaro / DSM 804).